Reading from the N-terminus, the 267-residue chain is Placental prolactin-related protein 2 (267 aa).

N-linked (GlcNAc...) asparagine glycosylation is found at Asn-99 and Asn-121. 2 cysteine pairs are disulfide-bonded: Cys-126–Cys-244 and Cys-261–Cys-267.

This sequence belongs to the somatotropin/prolactin family.

It localises to the secreted. Placental prolactin-related proteins may play a specific role during gestation. The protein is Placental prolactin-related protein 2 (PRP2) of Bos taurus (Bovine).